The chain runs to 336 residues: Ferredoxin--NADP reductase 1 (336 aa).

Positions 37, 45, 50, 90, 125, 287, and 328 each coordinate FAD.

It belongs to the ferredoxin--NADP reductase type 2 family. Homodimer. The cofactor is FAD.

It catalyses the reaction 2 reduced [2Fe-2S]-[ferredoxin] + NADP(+) + H(+) = 2 oxidized [2Fe-2S]-[ferredoxin] + NADPH. The sequence is that of Ferredoxin--NADP reductase 1 (ycgT) from Bacillus subtilis (strain 168).